The following is a 172-amino-acid chain: Protein-export protein SecB (172 aa).

This sequence belongs to the SecB family. Homotetramer, a dimer of dimers. One homotetramer interacts with 1 SecA dimer.

It is found in the cytoplasm. Functionally, one of the proteins required for the normal export of preproteins out of the cell cytoplasm. It is a molecular chaperone that binds to a subset of precursor proteins, maintaining them in a translocation-competent state. It also specifically binds to its receptor SecA. The protein is Protein-export protein SecB of Stenotrophomonas maltophilia (strain K279a).